A 214-amino-acid chain; its full sequence is Pyrrolidone-carboxylate peptidase 2 (214 aa).

Residues E78, C141, and H165 contribute to the active site.

Belongs to the peptidase C15 family. In terms of assembly, homotetramer.

Its subcellular location is the cytoplasm. It carries out the reaction Release of an N-terminal pyroglutamyl group from a polypeptide, the second amino acid generally not being Pro.. Its function is as follows. Removes 5-oxoproline from various penultimate amino acid residues except L-proline. The chain is Pyrrolidone-carboxylate peptidase 2 from Streptococcus pneumoniae serotype 4 (strain ATCC BAA-334 / TIGR4).